A 391-amino-acid chain; its full sequence is Coproporphyrin III ferrochelatase (391 aa).

Positions 79 and 148 each coordinate Fe-coproporphyrin III. Residues His-211 and Glu-305 each coordinate Fe(2+).

Belongs to the ferrochelatase family.

The protein resides in the cytoplasm. It catalyses the reaction Fe-coproporphyrin III + 2 H(+) = coproporphyrin III + Fe(2+). It participates in porphyrin-containing compound metabolism; protoheme biosynthesis. Functionally, involved in coproporphyrin-dependent heme b biosynthesis. Catalyzes the insertion of ferrous iron into coproporphyrin III to form Fe-coproporphyrin III. In Tropheryma whipplei (strain TW08/27) (Whipple's bacillus), this protein is Coproporphyrin III ferrochelatase.